Reading from the N-terminus, the 2272-residue chain is Voltage-dependent R-type calcium channel subunit alpha-1E (2272 aa).

Residues 1–40 are disordered; the sequence is MARFGEAVVVGRPGSGDGDSDQSRNRQGTPVPASGPAAAY. At 1-90 the chain is on the cytoplasmic side; it reads MARFGEAVVV…KYAKKLIDWP (90 aa). Phosphoserine is present on residues serine 15 and serine 20. One copy of the I repeat lies at 77 to 355; the sequence is NIVRKYAKKL…LVLGVLSGEF (279 aa). A helical transmembrane segment spans residues 91–109; sequence PFEYMILATIIANCIVLAL. Residues 110–128 are Extracellular-facing; sequence EQHLPEDDKTPMSRRLEKT. Residues 129-147 form a helical membrane-spanning segment; that stretch reads EPYFIGIFCFEAGIKIVAL. Residues 148-159 lie on the Cytoplasmic side of the membrane; the sequence is GFIFHKGSYLRN. The helical transmembrane segment at 160-174 threads the bilayer; the sequence is GWNVMDFIVVLSGIL. The Extracellular portion of the chain corresponds to 175-186; sequence ATAGTHFNTHVD. The chain crosses the membrane as a helical span at residues 187–206; the sequence is LRALRAVRVLRPLKLVSGIP. Over 207–224 the chain is Cytoplasmic; that stretch reads SLQIVLKSIMKAMVPLLQ. Residues 225–245 traverse the membrane as a helical segment; the sequence is IGLLLFFAILMFAIIGLEFYS. Over 246–327 the chain is Extracellular; that stretch reads GKLHRACFMN…NTNDALGATW (82 aa). N-linked (GlcNAc...) asparagine glycosylation is present at asparagine 255. Residues 328-351 form a helical membrane-spanning segment; that stretch reads NWLYFIPLIIIGSFFVLNLVLGVL. Residues 352–477 are Cytoplasmic-facing; that stretch reads SGEFAKERER…ISIRHMVKSQ (126 aa). The segment at 375–392 is binding to the beta subunit; that stretch reads QQIERELNGYRAWIDKAE. Aspartate 427 contacts Ca(2+). At serine 428 the chain carries Phosphoserine. 4 residues coordinate Ca(2+): serine 429, glutamate 431, cysteine 433, and serine 438. Threonine 441 bears the Phosphothreonine mark. One copy of the II repeat lies at 463–707; that stretch reads ERLLRISIRH…VFLAIAVDNL (245 aa). The helical transmembrane segment at 478 to 497 threads the bilayer; it reads VFYWIVLSVVALNTACVAIV. Residues 498 to 510 are Extracellular-facing; the sequence is HHNQPQWLTHLLY. The helical transmembrane segment at 511–530 threads the bilayer; sequence YAEFLFLGLFLLEMSLKMYG. Residues 531–539 lie on the Cytoplasmic side of the membrane; it reads MGPRLYFHS. The chain crosses the membrane as a helical span at residues 540 to 558; the sequence is SFNCFDFGVTVGSIFEVVW. The Extracellular portion of the chain corresponds to 559-568; that stretch reads AIFRPGTSFG. A helical membrane pass occupies residues 569–587; the sequence is ISVLRALRLLRIFKITKYW. Residues 588-606 lie on the Cytoplasmic side of the membrane; it reads ASLRNLVVSLMSSMKSIIS. A helical transmembrane segment spans residues 607-626; that stretch reads LLFLLFLFIVVFALLGMQLF. Residues 627–679 are Extracellular-facing; the sequence is GGRFNFNDGTPSANFDTFPAAIMTVFQILTGEDWNEVMYNGIRSQGGVSSGMW. The helical transmembrane segment at 680–704 threads the bilayer; it reads SAIYFIVLTLFGNYTLLNVFLAIAV. The Cytoplasmic portion of the chain corresponds to 705-1150; the sequence is DNLANAQELT…TTNPIRRACH (446 aa). The disordered stretch occupies residues 730-777; the sequence is LQKAKEVSPMSAPNMPSIERDRRRRHHMSMWEPRSSHLRERRRRHHMS. Phosphoserine is present on residues serine 737, serine 746, serine 794, serine 816, and serine 856. Disordered stretches follow at residues 854 to 994 and 1091 to 1127; these read GGSL…VPRG and SNKTDGEASPLKEAETKEEEEEVEKKKKQKKEKRETG. Positions 914-927 are enriched in basic residues; it reads RHRQSQRRSRHRRV. Over residues 934-946 the composition is skewed to low complexity; it reads SASASRSRSASQE. Residue serine 948 is modified to Phosphoserine. 2 stretches are compositionally biased toward basic and acidic residues: residues 956-985 and 1094-1105; these read EGEKEHEPHSSHRSKEPTIHEEERTQDLRR and TDGEASPLKEAE. Serine 1099 carries the post-translational modification Phosphoserine. The stretch at 1143–1429 is one III repeat; it reads NPIRRACHYI…IFVALIIITF (287 aa). The helical transmembrane segment at 1151 to 1167 threads the bilayer; sequence YIVNLRYFEMCILLVIA. Topologically, residues 1168-1191 are extracellular; the sequence is ASSIALAAEDPVLTNSERNKVLRY. A helical membrane pass occupies residues 1192–1211; it reads FDYVFTGVFTFEMVIKMIDQ. Residues 1212 to 1219 are Cytoplasmic-facing; the sequence is GLILQDGS. The helical transmembrane segment at 1220–1242 threads the bilayer; sequence YFRDLWNILDFVVVVGALVAFAL. Over 1243–1256 the chain is Extracellular; it reads ANALGTNKGRDIKT. The helical transmembrane segment at 1257–1274 threads the bilayer; that stretch reads IKSLRVLRVLRPLKTIKR. Residues 1275 to 1293 lie on the Cytoplasmic side of the membrane; it reads LPKLKAVFDCVVTSLKNVF. The helical transmembrane segment at 1294–1313 threads the bilayer; that stretch reads NILIVYKLFMFIFAVIAVQL. At 1314–1400 the chain is on the extracellular side; it reads FKGKFFYCTD…DRGPSRSNRM (87 aa). The helical transmembrane segment at 1401 to 1424 threads the bilayer; sequence EMSIFYVVYFVVFPFFFVNIFVAL. Residues 1425-1481 are Cytoplasmic-facing; sequence IIITFQEQGDKMMEECSLEKNERACIDFAISAKPLTRYMPQNRHTFQYRVWHFVVSP. The stretch at 1466–1729 is one IV repeat; that stretch reads NRHTFQYRVW…LFVAVIMDNF (264 aa). A helical membrane pass occupies residues 1482-1500; sequence SFEYTIMAMIALNTVVLMM. Residues 1501-1515 are Extracellular-facing; it reads KYYTAPCTYELALKY. A helical transmembrane segment spans residues 1516 to 1535; the sequence is LNIAFTMVFSLECVLKVIAF. The Cytoplasmic segment spans residues 1536-1543; sequence GFLNYFRD. A helical membrane pass occupies residues 1544–1562; that stretch reads TWNIFDFITVIGSITEIIL. Residues 1563-1573 lie on the Extracellular side of the membrane; that stretch reads TDSKLVNTSGF. Asparagine 1569 is a glycosylation site (N-linked (GlcNAc...) asparagine). A helical transmembrane segment spans residues 1574 to 1592; that stretch reads NMSFLKLFRAARLIKLLRQ. The Cytoplasmic segment spans residues 1593-1611; it reads GYTIRILLWTFVQSFKALP. Residues 1612–1631 traverse the membrane as a helical segment; it reads YVCLLIAMLFFIYAIIGMQV. Topologically, residues 1632–1700 are extracellular; that stretch reads FGNIKLDEES…QNESERCGTD (69 aa). A glycan (N-linked (GlcNAc...) asparagine) is linked at asparagine 1692. The chain crosses the membrane as a helical span at residues 1701–1726; sequence LAYVYFVSFIFFCSFLMLNLFVAVIM. At 1727–2272 the chain is on the cytoplasmic side; sequence DNFEYLTRDS…LSDTEEDDKC (546 aa). In terms of domain architecture, EF-hand spans 1742–1777; that stretch reads HHLDEFVRVWAEYDRAACGRIHYTEMYEMLTLMSPP. The Ca(2+) site is built by aspartate 1755, arginine 1761, and glutamate 1766. The segment at 2021–2186 is disordered; sequence SAHRLNSDSG…QQGQHPSPQH (166 aa). Basic and acidic residues predominate over residues 2025-2045; it reads LNSDSGHKSDTHRSGGRERGR. A phosphoserine mark is found at serine 2054 and serine 2073. Basic and acidic residues predominate over residues 2061-2078; sequence NSEERGTQADWESPERRQ. The segment covering 2097 to 2112 has biased composition (low complexity); that stretch reads SLSESSIPSISDTSTP. Polar residues predominate over residues 2155–2174; sequence LASQALESNSACLTESSNSL. The segment covering 2175-2186 has biased composition (low complexity); it reads HPQQGQHPSPQH.

It belongs to the calcium channel alpha-1 subunit (TC 1.A.1.11) family. CACNA1E subfamily. Interacts with EFHC1. Voltage-dependent calcium channels are multisubunit complexes, consisting of alpha-1, alpha-2, beta and delta subunits in a 1:1:1:1 ratio. The channel activity is directed by the pore-forming and voltage-sensitive alpha-1 subunit. In many cases, this subunit is sufficient to generate voltage-sensitive calcium channel activity. The auxiliary subunits beta and alpha-2/delta linked by a disulfide bridge regulate the channel activity. As to expression, expressed in neuronal tissues, retina, spleen, and pancreatic islet cells.

The protein localises to the membrane. It carries out the reaction Ca(2+)(in) = Ca(2+)(out). Its function is as follows. Voltage-sensitive calcium channels (VSCC) mediate the entry of calcium ions into excitable cells and are also involved in a variety of calcium-dependent processes, including muscle contraction, hormone or neurotransmitter release, gene expression, cell motility, cell division and cell death. The isoform alpha-1E gives rise to R-type calcium currents. R-type calcium channels belong to the 'high-voltage activated' (HVA) group and are blocked by nickel. They are however insensitive to dihydropyridines (DHP). Calcium channels containing alpha-1E subunit could be involved in the modulation of firing patterns of neurons which is important for information processing. This is Voltage-dependent R-type calcium channel subunit alpha-1E (Cacna1e) from Mus musculus (Mouse).